We begin with the raw amino-acid sequence, 146 residues long: Large ribosomal subunit protein uL15 (146 aa).

Residues 1 to 57 (MDLSNLKAAEGSVHSDNFRRGRGHGSGNGKTAGKGHKGQKARSGAPRPGFEGGQMPL) are disordered.

Belongs to the universal ribosomal protein uL15 family. Part of the 50S ribosomal subunit.

Functionally, binds to the 23S rRNA. The sequence is that of Large ribosomal subunit protein uL15 from Agathobacter rectalis (strain ATCC 33656 / DSM 3377 / JCM 17463 / KCTC 5835 / VPI 0990) (Eubacterium rectale).